The following is a 344-amino-acid chain: MSTSLSYRDAGVDIDAGDQLVENIKPFAKRTMRPEVLGDLGGFGALVEIGKKYKNPVLVSGTDGVGTKLKLAFDWDKHDTVGIDLVAMSVNDILVQGAEPLFFLDYFACGELDVPRATDVIKGIAQGCEESGCALIGGETAEMPGMYPVGEYDLAGFAVGVVEKENVITGRSIGAGDVVLGLASNGAHSNGYSLIRKIIERDNPDLDAEFDNGKTLREAVIAPTRLYVKPILAALEKFTIKGMAHITGGGITENVPRVLPENTVAQIDAKSWELPKLFQWLQKAGNVETQEMYRTFNCGIGMVVIVAAEDADAVQDLLGEQGETVYRLGLIRERQGDEHQTQVA.

The protein belongs to the AIR synthase family.

The protein localises to the cytoplasm. It carries out the reaction 2-formamido-N(1)-(5-O-phospho-beta-D-ribosyl)acetamidine + ATP = 5-amino-1-(5-phospho-beta-D-ribosyl)imidazole + ADP + phosphate + H(+). It functions in the pathway purine metabolism; IMP biosynthesis via de novo pathway; 5-amino-1-(5-phospho-D-ribosyl)imidazole from N(2)-formyl-N(1)-(5-phospho-D-ribosyl)glycinamide: step 2/2. In Neisseria meningitidis serogroup C / serotype 2a (strain ATCC 700532 / DSM 15464 / FAM18), this protein is Phosphoribosylformylglycinamidine cyclo-ligase.